The following is an 86-amino-acid chain: Large ribosomal subunit protein bL27 (86 aa).

Residues 1–10 are compositionally biased toward gly residues; sequence MAQKKGGGST. Residues 1 to 21 are disordered; that stretch reads MAQKKGGGSTRNGRDSESKRL.

Belongs to the bacterial ribosomal protein bL27 family.

The sequence is that of Large ribosomal subunit protein bL27 from Ralstonia nicotianae (strain ATCC BAA-1114 / GMI1000) (Ralstonia solanacearum).